The sequence spans 283 residues: Protein/nucleic acid deglycase HchA (283 aa).

Zn(2+) is bound by residues H86, E91, and H123. Residue C185 is the Nucleophile of the active site.

Belongs to the peptidase C56 family. HchA subfamily. As to quaternary structure, homodimer.

It localises to the cytoplasm. It carries out the reaction N(omega)-(1-hydroxy-2-oxopropyl)-L-arginyl-[protein] + H2O = lactate + L-arginyl-[protein] + H(+). The catalysed reaction is N(6)-(1-hydroxy-2-oxopropyl)-L-lysyl-[protein] + H2O = lactate + L-lysyl-[protein] + H(+). It catalyses the reaction S-(1-hydroxy-2-oxopropyl)-L-cysteinyl-[protein] + H2O = lactate + L-cysteinyl-[protein] + H(+). The enzyme catalyses N(omega)-(1-hydroxy-2-oxoethyl)-L-arginyl-[protein] + H2O = L-arginyl-[protein] + glycolate + H(+). It carries out the reaction N(6)-(1-hydroxy-2-oxoethyl)-L-lysyl-[protein] + H2O = glycolate + L-lysyl-[protein] + H(+). The catalysed reaction is S-(1-hydroxy-2-oxoethyl)-L-cysteinyl-[protein] + H2O = glycolate + L-cysteinyl-[protein] + H(+). It catalyses the reaction N(2)-(1-hydroxy-2-oxopropyl)-dGTP + H2O = lactate + dGTP + H(+). The enzyme catalyses N(2)-(1-hydroxy-2-oxopropyl)-GTP + H2O = lactate + GTP + H(+). It carries out the reaction N(2)-(1-hydroxy-2-oxopropyl)-GDP + H2O = lactate + GDP + H(+). The catalysed reaction is N(2)-(1-hydroxy-2-oxopropyl)-GMP + H2O = lactate + GMP + H(+). It catalyses the reaction N(2)-(1-hydroxy-2-oxoethyl)-dGTP + H2O = dGTP + glycolate + H(+). The enzyme catalyses N(2)-(1-hydroxy-2-oxoethyl)-GTP + H2O = glycolate + GTP + H(+). It carries out the reaction N(2)-(1-hydroxy-2-oxoethyl)-GDP + H2O = glycolate + GDP + H(+). The catalysed reaction is N(2)-(1-hydroxy-2-oxoethyl)-GMP + H2O = glycolate + GMP + H(+). It catalyses the reaction an N(2)-(1-hydroxy-2-oxopropyl)-guanosine in RNA + H2O = a guanosine in RNA + lactate + H(+). The enzyme catalyses an N(2)-(1-hydroxy-2-oxopropyl)-2'-deoxyguanosine in DNA + H2O = a 2'-deoxyguanosine in DNA + lactate + H(+). It carries out the reaction an N(2)-(1-hydroxy-2-oxoethyl)-guanosine in RNA + H2O = a guanosine in RNA + glycolate + H(+). The catalysed reaction is an N(2)-(1-hydroxy-2-oxoethyl)-2'-deoxyguanosine in DNA + H2O = a 2'-deoxyguanosine in DNA + glycolate + H(+). In terms of biological role, protein and nucleotide deglycase that catalyzes the deglycation of the Maillard adducts formed between amino groups of proteins or nucleotides and reactive carbonyl groups of glyoxals. Thus, functions as a protein deglycase that repairs methylglyoxal- and glyoxal-glycated proteins, and releases repaired proteins and lactate or glycolate, respectively. Deglycates cysteine, arginine and lysine residues in proteins, and thus reactivates these proteins by reversing glycation by glyoxals. Acts on early glycation intermediates (hemithioacetals and aminocarbinols), preventing the formation of Schiff bases and advanced glycation endproducts (AGE). Also functions as a nucleotide deglycase able to repair glycated guanine in the free nucleotide pool (GTP, GDP, GMP, dGTP) and in DNA and RNA. Is thus involved in a major nucleotide repair system named guanine glycation repair (GG repair), dedicated to reversing methylglyoxal and glyoxal damage via nucleotide sanitization and direct nucleic acid repair. Plays an important role in protecting cells from carbonyl stress. The chain is Protein/nucleic acid deglycase HchA from Escherichia coli O157:H7.